The chain runs to 215 residues: uncharacterized protein (215 aa).

Residues Gly53, Glu74, and Asp97 each coordinate S-adenosyl-L-methionine.

The protein belongs to the methyltransferase superfamily. YrrT family.

Functionally, could be a S-adenosyl-L-methionine-dependent methyltransferase. This is an uncharacterized protein from Geobacillus kaustophilus (strain HTA426).